The primary structure comprises 156 residues: Small ribosomal subunit protein uS7 (156 aa).

The protein belongs to the universal ribosomal protein uS7 family. Part of the 30S ribosomal subunit. Contacts proteins S9 and S11.

One of the primary rRNA binding proteins, it binds directly to 16S rRNA where it nucleates assembly of the head domain of the 30S subunit. Is located at the subunit interface close to the decoding center, probably blocks exit of the E-site tRNA. The protein is Small ribosomal subunit protein uS7 of Chelativorans sp. (strain BNC1).